We begin with the raw amino-acid sequence, 840 residues long: Lon protease homolog 2, peroxisomal (840 aa).

The region spanning 13–222 is the Lon N-terminal domain; sequence LPLLCTHDGV…KALPLLTRQI (210 aa). 375 to 382 is a binding site for ATP; it reads GPPGVGKT. The disordered stretch occupies residues 583-606; it reads QKVSRSEAPTEQHAEQNTDSKVED. The span at 584–606 shows a compositional bias: basic and acidic residues; the sequence is KVSRSEAPTEQHAEQNTDSKVED. In terms of domain architecture, Lon proteolytic spans 641-825; sequence LTLPGVAIGL…DEVLNAAFDG (185 aa). Residues S731 and K774 contribute to the active site. The Microbody targeting signal motif lies at 838–840; sequence SKL.

The protein belongs to the peptidase S16 family.

It localises to the peroxisome matrix. The enzyme catalyses Hydrolysis of proteins in presence of ATP.. ATP-dependent serine protease that mediates the selective degradation of misfolded and unassembled polypeptides in the peroxisomal matrix. Necessary for type 2 peroxisome targeting signal (PTS2)-containing protein processing and facilitates peroxisome matrix protein import. The protein is Lon protease homolog 2, peroxisomal (lonp2) of Danio rerio (Zebrafish).